A 964-amino-acid polypeptide reads, in one-letter code: Pumilio homolog 3 (964 aa).

The tract at residues 1–22 (MMIPELGRRPMHRGNEDSSFGD) is disordered. Residue Ser-192 is modified to Phosphoserine. Disordered stretches follow at residues 204–235 (PVVQQPSRPASRNTFDENVDSNNNLSPSASQG), 256–300 (GTPD…TSGL), and 343–388 (DGHN…VANP). Composition is skewed to polar residues over residues 207 to 216 (QQPSRPASRN) and 223 to 234 (DSNNNLSPSASQ). Position 257 is a phosphothreonine (Thr-257). Polar residues-rich tracts occupy residues 287–300 (TSNQSPFNGVTSGL) and 356–384 (RSDQARGTASCRNSQMRGSQGSAYNSGSG). The PUM-HD domain occupies 606–946 (FGSSMLEEFK…HIVARVEKLV (341 aa)). Pumilio repeat units follow at residues 626–661 (EIAGHVVEFSSDQYGSRFIQQKLETATTDEKNMVYE), 662–697 (EIMPKALALMTDVFGNYVIQKFFEHGLPPQRRELGE), 698–733 (KLIDNVLPLSLQMYGCRVIQKAIEVVDLDQKIQMVK), 734–769 (ELDGHVMRCVRDQNGNHVVQKCIECVPEENIEFIIS), 770–806 (TFFGHVVTLSTHPYGCRVIQRVLEHCHNPDTQSKVME), 807–842 (EILSTVSMLTQDQYGNYVVQHVLEHGKPDERTVIIK), 843–878 (ELAGKIVQMSQQKFASNVVEKCLTFGGPEERELLVN), and 879–920 (EMLG…LILT).

It localises to the cytoplasm. Its function is as follows. Sequence-specific RNA-binding protein that regulates translation and mRNA stability by binding the 3'-UTR of target mRNAs. Binds the APUM-binding elements (APBEs) in the 3'-UTR mRNA sequence of CLV1, PNH, WUS and FAS2. The protein is Pumilio homolog 3 (APUM3) of Arabidopsis thaliana (Mouse-ear cress).